A 117-amino-acid chain; its full sequence is Large ribosomal subunit protein bL19 (117 aa).

It belongs to the bacterial ribosomal protein bL19 family.

Functionally, this protein is located at the 30S-50S ribosomal subunit interface and may play a role in the structure and function of the aminoacyl-tRNA binding site. This chain is Large ribosomal subunit protein bL19, found in Shewanella frigidimarina (strain NCIMB 400).